The primary structure comprises 284 residues: Protein phosphatase 1 regulatory subunit 3B (284 aa).

A PP1-binding motif motif is present at residues 61–64 (RVSF). Residues 124 to 232 (RNRLQTNHVC…SNKGKNYRIT (109 aa)) enclose the CBM21 domain. Serine 260 carries the post-translational modification Phosphoserine.

As to quaternary structure, interacts with glycogen, PPP1CC catalytic subunit of PP1 and PYGL. Associates with glycogen particles. Forms complexes with debranching enzyme, glycogen phosphorylase, glycogen synthase and phosphorylase kinase which is necessary for its regulation of PP1 activity. In terms of tissue distribution, highly expressed in liver (at protein level). Expressed predominantly in liver. Expressed moderately in heart. Expressed weakly in prostate, stomach, thyroid, lung, kidney, spleen and skeletal muscle.

Functionally, acts as a glycogen-targeting subunit for phosphatase PP1. Facilitates interaction of the PP1 with enzymes of the glycogen metabolism and regulates its activity. Suppresses the rate at which PP1 dephosphorylates (inactivates) glycogen phosphorylase and enhances the rate at which it activates glycogen synthase and therefore limits glycogen breakdown. Its activity is inhibited by PYGL, resulting in inhibition of the glycogen synthase and glycogen phosphorylase phosphatase activities of PP1. Dramatically increases basal and insulin-stimulated glycogen synthesis upon overexpression in hepatocytes. The polypeptide is Protein phosphatase 1 regulatory subunit 3B (Ppp1r3b) (Mus musculus (Mouse)).